Consider the following 316-residue polypeptide: Probable 5-dehydro-4-deoxyglucarate dehydratase (316 aa).

The protein belongs to the DapA family.

The enzyme catalyses 5-dehydro-4-deoxy-D-glucarate + H(+) = 2,5-dioxopentanoate + CO2 + H2O. Its pathway is carbohydrate acid metabolism; D-glucarate degradation; 2,5-dioxopentanoate from D-glucarate: step 2/2. This chain is Probable 5-dehydro-4-deoxyglucarate dehydratase, found in Corynebacterium glutamicum (strain ATCC 13032 / DSM 20300 / JCM 1318 / BCRC 11384 / CCUG 27702 / LMG 3730 / NBRC 12168 / NCIMB 10025 / NRRL B-2784 / 534).